Reading from the N-terminus, the 416-residue chain is Doublesex- and mab-3-related transcription factor A2 (416 aa).

The DM DNA-binding region spans 25–72 (CARCRNHGVVSALKGHKRYCRWKDCMCAKCTLIAERQRVMAAQVALRR). The segment covering 131–154 (FSKGQLSGPTTPQQAAGKSASAES) has biased composition (polar residues). The disordered stretch occupies residues 131-226 (FSKGQLSGPT…PSPSSAASRH (96 aa)). Positions 197–207 (GSVSSIGSDSG) are enriched in low complexity. The 36-residue stretch at 227-262 (MNAIDILTRVFPSHKRSILELVLQGCGKDVVQAIEQ) folds into the DMA domain.

Belongs to the DMRT family.

It localises to the nucleus. May be involved in sexual development. The protein is Doublesex- and mab-3-related transcription factor A2 (dmrta2) of Takifugu rubripes (Japanese pufferfish).